Reading from the N-terminus, the 97-residue chain is uncharacterized protein (97 aa).

The tract at residues 72-97 is disordered; that stretch reads TVERKRSEHTNSRKKDPSAYTWSDVK. Positions 73–88 are enriched in basic and acidic residues; sequence VERKRSEHTNSRKKDP.

Belongs to the chlamydial CPn_0121/CT_031/TC_0300 family.

This is an uncharacterized protein from Chlamydia pneumoniae (Chlamydophila pneumoniae).